Here is a 414-residue protein sequence, read N- to C-terminus: Transcription factor FAMA (414 aa).

2 disordered regions span residues M1–D61 and K142–M197. Low complexity-rich tracts occupy residues G12 to G24 and Q35 to Q49. The segment covering R166–E175 has biased composition (basic and acidic residues). Positions V176–T185 are enriched in basic residues. Positions K187–M197 are enriched in basic and acidic residues. One can recognise a bHLH domain in the interval S194–L245. The LxCxE motif signature appears at L249–E253.

Interacts with FAMA through its LxCxE motif. Self-interacts. Also interacts with bHLH071 and bHLH093. Interacts with RBR1. As to expression, resctricted to stomatal cell lineages (at protein level). Expressed in roots, leaves, stems, and flowers.

The protein localises to the nucleus. Its function is as follows. Transcription activator. Together with MYB88 and MYB124, ensures that stomata contain just two guard cells (GCs) by enforcing a single symmetric precursor cell division before stomatal maturity. Together with SPCH and MUTE, regulates the stomata formation. Required to promote differentiation and morphogenesis of stomatal guard cells and to halt proliferative divisions in their immediate precursors. Mediates the formation of stomata. Prevents histone H3K27me3 marks and derepresses stem cell gene expression. This is Transcription factor FAMA (FAMA) from Arabidopsis thaliana (Mouse-ear cress).